The chain runs to 490 residues: Cysteine desulfurase, mitochondrial (490 aa).

Residues 161–162 (AT), Asn-241, Gln-269, and 289–291 (SSH) contribute to the pyridoxal 5'-phosphate site. Lys-292 is modified (N6-(pyridoxal phosphate)lysine). Residue Thr-329 participates in pyridoxal 5'-phosphate binding. The active-site Cysteine persulfide intermediate is Cys-414. Cys-414 lines the [2Fe-2S] cluster pocket.

The protein belongs to the class-V pyridoxal-phosphate-dependent aminotransferase family. NifS/IscS subfamily. Pyridoxal 5'-phosphate serves as cofactor.

The protein localises to the mitochondrion. The catalysed reaction is (sulfur carrier)-H + L-cysteine = (sulfur carrier)-SH + L-alanine. In terms of biological role, catalyzes the removal of elemental sulfur from cysteine to produce alanine. It supplies the inorganic sulfur for iron-sulfur (Fe-S) clusters. Plays a role in both tRNA-processing and mitochondrial metabolism. Involved in the 2-thio-modification of both 5-carboxymethylaminomethyl-2-thiouridine in mitochondrial tRNAs and 5-methoxycarbonylmethyl-2-thiouridine (mcm5s2U) in cytoplasmic tRNAs. This is Cysteine desulfurase, mitochondrial from Eremothecium gossypii (strain ATCC 10895 / CBS 109.51 / FGSC 9923 / NRRL Y-1056) (Yeast).